The chain runs to 264 residues: Carbohydrate deacetylase (264 aa).

Catalysis depends on aspartate 20, which acts as the Proton acceptor. The Mg(2+) site is built by aspartate 21, histidine 60, and histidine 127. Histidine 215 serves as the catalytic Proton donor.

The protein belongs to the YdjC deacetylase family. Homodimer. Mg(2+) is required as a cofactor.

Probably catalyzes the deacetylation of acetylated carbohydrates an important step in the degradation of oligosaccharides. This is Carbohydrate deacetylase from Thermus thermophilus (strain ATCC 27634 / DSM 579 / HB8).